We begin with the raw amino-acid sequence, 312 residues long: Putative HTH-type transcriptional regulatory protein TV0294 (312 aa).

One can recognise an HTH cro/C1-type domain in the interval 133 to 186; sequence LRERRNELNLSIGNISSYLGVSRRSVSLYENGSAATIDIFIRLRNILKADIVDH. A DNA-binding region (H-T-H motif) is located at residues 144–163; that stretch reads IGNISSYLGVSRRSVSLYEN.

The sequence is that of Putative HTH-type transcriptional regulatory protein TV0294 from Thermoplasma volcanium (strain ATCC 51530 / DSM 4299 / JCM 9571 / NBRC 15438 / GSS1).